The chain runs to 127 residues: Modulator protein MzrA (127 aa).

The Cytoplasmic portion of the chain corresponds to 1–10 (MVISPLALRR). Residues 11-31 (LSYGLIALVLLSALILVWTAL) form a helical membrane-spanning segment. Residues 32–127 (QRQESTLAIR…RLRDTSHRFG (96 aa)) are Periplasmic-facing.

Belongs to the MzrA family. In terms of assembly, interacts with EnvZ.

It is found in the cell inner membrane. Its function is as follows. Modulates the activity of the EnvZ/OmpR two-component regulatory system, probably by directly modulating EnvZ enzymatic activity and increasing stability of phosphorylated OmpR. The polypeptide is Modulator protein MzrA (Enterobacter sp. (strain 638)).